The primary structure comprises 1164 residues: MKAPSSNGVSPNPVEGERRNINSELWHACAGPLISLPPAGSLVVYFPQGHSEQVAASMQKQTDFIPSYPNLPSKLICMLHNVTLNADPETDEVYAQMTLQPVNKYDRDALLASDMGLKLNRQPNEFFCKTLTASDTSTHGGFSVPRRAAEKIFPALDFSMQPPCQELVAKDIHDNTWTFRHIYRGQPKRHLLTTGWSVFVSTKRLFAGDSVLFIRDGKAQLLLGIRRANRQQPALSSSVISSDSMHIGVLAAAAHANANNSPFTIFYNPRAAPAEFVVPLAKYTKAMYAQVSLGMRFRMIFETEECGVRRYMGTVTGISDLDPVRWKNSQWRNLQIGWDESAAGDRPSRVSVWDIEPVLTPFYICPPPFFRPRFSGQPGMPDDETDMESALKRAMPWLDNSLEMKDPSSTIFPGLSLVQWMNMQQQNGQLPSAAAQPGFFPSMLSPTAALHNNLGGTDDPSKLLSFQTPHGGISSSNLQFNKQNQQAPMSQLPQPPTTLSQQQQLQQLLHSSLNHQQQQSQSQQQQQQQQLLQQQQQLQSQQHSNNNQSQSQQQQQLLQQQQQQQLQQQHQQPLQQQTQQQQLRTQPLQSHSHPQPQQLQQHKLQQLQVPQNQLYNGQQAAQQHQSQQASTHHLQPQLVSGSMASSVITPPSSSLNQSFQQQQQQSKQLQQAHHHLGASTSQSSVIETSKSSSNLMSAPPQETQFSRQVEQQQPPGLNGQNQQTLLQQKAHQAQAQQIFQQSLLEQPHIQFQLLQRLQQQQQQQFLSPQSQLPHHQLQSQQLQQLPTLSQGHQFPSSCTNNGLSTLQPPQMLVSRPQEKQNPPVGGGVKAYSGITDGGDAPSSSTSPSTNNCQISSSGFLNRSQSGPAILIPDAAIDMSGNLVQDLYSKSDMRLKQELVGQQKSKASLTDHQLEASASGTSYGLDGGENNRQQNFLAPTFGLDGDSRNSLLGGANVDNGFVPDTLLSRGYDSQKDLQNMLSNYGGVTNDIGTEMSTSAVRTQSFGVPNVPAISNDLAVNDAGVLGGGLWPAQTQRMRTYTKVQKRGSVGRSIDVNRYRGYDELRHDLARMFGIEGQLEDPQTSDWKLVYVDHENDILLVGDDPWEEFVNCVQSIKILSSAEVQQMSLDGNFAGVPVTNQACSGGDSGNAWRGHYDDNSATSFNR.

The segment at residues 127 to 229 is a DNA-binding region (TF-B3); sequence FCKTLTASDT…QLLLGIRRAN (103 aa). 5 disordered regions span residues 451-505, 536-555, 570-728, 765-858, and 903-930; these read HNNL…QQQL, QQLQ…QQQQ, HQQP…LLQQ, FLSP…SSSG, and KSKA…GENN. Positions 464-489 are enriched in polar residues; the sequence is LSFQTPHGGISSSNLQFNKQNQQAPM. The segment covering 570–635 has biased composition (low complexity); the sequence is HQQPLQQQTQ…SQQASTHHLQ (66 aa). Polar residues predominate over residues 637-651; that stretch reads QLVSGSMASSVITPP. The segment covering 652–671 has biased composition (low complexity); that stretch reads SSSLNQSFQQQQQQSKQLQQ. Residues 678 to 710 show a composition bias toward polar residues; the sequence is ASTSQSSVIETSKSSSNLMSAPPQETQFSRQVE. 2 stretches are compositionally biased toward low complexity: residues 711 to 728 and 765 to 790; these read QQQP…LLQQ and FLSP…TLSQ. Positions 791-808 are enriched in polar residues; sequence GHQFPSSCTNNGLSTLQP. The span at 841–851 shows a compositional bias: low complexity; that stretch reads PSSSTSPSTNN. Over residues 903–921 the composition is skewed to polar residues; sequence KSKASLTDHQLEASASGTS. Residues 1037–1130 form the PB1 domain; the sequence is RTYTKVQKRG…EVQQMSLDGN (94 aa). Positions 1145–1164 are disordered; sequence DSGNAWRGHYDDNSATSFNR.

The protein belongs to the ARF family. In terms of assembly, homodimers and heterodimers. Interacts with the auxin-responsive proteins IAA1 and IAA12 (BODENLOS). Interacts (via PB1 domain) with IAA17 (via PB1 domain). Interacts with IAA19. Interacts with ARF5. Binds to JMJ30. Binds to ATXR2 in the nucleus. In terms of tissue distribution, expressed in the whole plant.

The protein resides in the nucleus. Auxin response factors (ARFs) are transcriptional factors that bind specifically to the DNA sequence 5'-TGTCTC-3' found in the auxin-responsive promoter elements (AuxREs). Acts as a transcriptional activator of several tropic stimulus-induced (TSI) genes, including SAUR50. Formation of heterodimers with Aux/IAA proteins may alter their ability to modulate early auxin response genes expression. Required for differential growth responses of aerial tissues. Involved in ethylene responses. Regulates lateral root formation through direct regulation of LBD16 and/or LBD29. Functionally redundant with ARF19. Mediates embryo axis formation and vascular tissues differentiation. Functionally redundant with ARF5. Involved in cellular dedifferentiation during callus formation on callus-inducing medium (CIM) and in an ATXR2-dependent manner. This chain is Auxin response factor 7, found in Arabidopsis thaliana (Mouse-ear cress).